Consider the following 318-residue polypeptide: Methionyl-tRNA formyltransferase (318 aa).

Residue 110-113 (SLLP) participates in (6S)-5,6,7,8-tetrahydrofolate binding.

It belongs to the Fmt family.

It catalyses the reaction L-methionyl-tRNA(fMet) + (6R)-10-formyltetrahydrofolate = N-formyl-L-methionyl-tRNA(fMet) + (6S)-5,6,7,8-tetrahydrofolate + H(+). Its function is as follows. Attaches a formyl group to the free amino group of methionyl-tRNA(fMet). The formyl group appears to play a dual role in the initiator identity of N-formylmethionyl-tRNA by promoting its recognition by IF2 and preventing the misappropriation of this tRNA by the elongation apparatus. This is Methionyl-tRNA formyltransferase from Lacticaseibacillus casei (strain BL23) (Lactobacillus casei).